The chain runs to 378 residues: AT-hook motif nuclear-localized protein 5 (378 aa).

Disordered regions lie at residues 30–70, 88–160, and 302–378; these read QVAS…AEHR, VQPT…GRKQ, and NNNK…LTRG. The segment covering 104 to 113 has biased composition (basic residues); it reads VKKKRGRPRK. Residues 105 to 113 carry the Bipartite nuclear localization signal motif; sequence KKKRGRPRK. DNA-binding regions (a.T hook) lie at residues 105-117 and 147-159; these read KKKR…YVPD and KRAR…TGRK. The PPC domain occupies 171–314; the sequence is TSAGLAFAPH…KTIKQEIKPK (144 aa). Polar residues-rich tracts occupy residues 316–327 and 335–345; these read EPTNSEMETTPG and STGQHTPQNFP.

Interacts with AHL29.

The protein resides in the nucleus. In terms of biological role, transcription factor that specifically binds AT-rich DNA sequences related to the nuclear matrix attachment regions (MARs). The protein is AT-hook motif nuclear-localized protein 5 of Arabidopsis thaliana (Mouse-ear cress).